Consider the following 430-residue polypeptide: tRNA(Ile)-lysidine synthase (430 aa).

27–32 (SGGSDS) lines the ATP pocket.

Belongs to the tRNA(Ile)-lysidine synthase family.

The protein resides in the cytoplasm. The catalysed reaction is cytidine(34) in tRNA(Ile2) + L-lysine + ATP = lysidine(34) in tRNA(Ile2) + AMP + diphosphate + H(+). In terms of biological role, ligates lysine onto the cytidine present at position 34 of the AUA codon-specific tRNA(Ile) that contains the anticodon CAU, in an ATP-dependent manner. Cytidine is converted to lysidine, thus changing the amino acid specificity of the tRNA from methionine to isoleucine. The polypeptide is tRNA(Ile)-lysidine synthase (Rickettsia bellii (strain RML369-C)).